The primary structure comprises 230 residues: Protein tumorous testis (230 aa).

The RRM domain occupies 37–128 (GELFLSCIPR…RELVLKNVES (92 aa)).

In terms of assembly, part of a complex composed of at least tut, bam and bgcn; complex formation does not require RNA. Interacts with bam (via N-terminus); the interaction is direct. Interacts with bgcn; the interaction is indirect and is mediated by bam. As part of the bam-bgcn-tut complex associates with twin; may recruit the CCR4-NOT1 deadenylation complex to mRNA 3'UTRs to mediate post-transcriptional regulation of expression.

Its subcellular location is the cytoplasm. In terms of biological role, RNA binding protein that forms a complex with bam and bgcn, involved in 3'UTR-dependent regulation of a subset of mRNAs. Preferentially binds a long isoform of mei-P26 transcripts. Involved in 3'UTR-dependent post-transcriptional repression of several 3'-RNA processing factors. Involved in promoting germline stem cell lineage differentiation and mitosis-to-meiosis transition. Required for proper transit amplification of spermatogonia. This is Protein tumorous testis from Drosophila melanogaster (Fruit fly).